A 306-amino-acid chain; its full sequence is Pantothenate kinase (306 aa).

91-98 (GSVAVGKS) is an ATP binding site.

It belongs to the prokaryotic pantothenate kinase family.

Its subcellular location is the cytoplasm. It catalyses the reaction (R)-pantothenate + ATP = (R)-4'-phosphopantothenate + ADP + H(+). The protein operates within cofactor biosynthesis; coenzyme A biosynthesis; CoA from (R)-pantothenate: step 1/5. This is Pantothenate kinase from Streptococcus pneumoniae (strain 70585).